Here is a 245-residue protein sequence, read N- to C-terminus: Thiopurine S-methyltransferase (245 aa).

29–40 (WQDKWVSHKIGF) is a binding site for S-adenosyl-L-methionine. Position 40 (Phe-40) interacts with substrate. Lys-58 is subject to N6-acetyllysine. S-adenosyl-L-methionine is bound by residues Leu-69, Glu-90, 134-135 (SI), and Arg-152.

This sequence belongs to the class I-like SAM-binding methyltransferase superfamily. TPMT family. As to quaternary structure, monomer.

The protein resides in the cytoplasm. It catalyses the reaction S-adenosyl-L-methionine + a thiopurine = S-adenosyl-L-homocysteine + a thiopurine S-methylether.. This is Thiopurine S-methyltransferase (TPMT) from Oryctolagus cuniculus (Rabbit).